The following is a 503-amino-acid chain: Maturase K (503 aa).

This sequence belongs to the intron maturase 2 family. MatK subfamily.

It localises to the plastid. The protein resides in the chloroplast. Functionally, usually encoded in the trnK tRNA gene intron. Probably assists in splicing its own and other chloroplast group II introns. In Rosa gigantea (Giant tea rose), this protein is Maturase K.